A 392-amino-acid polypeptide reads, in one-letter code: 5-azacytidine-induced protein 2 (392 aa).

Positions methionine 1–aspartate 197 are homodimerization. Coiled-coil stretches lie at residues alanine 40–arginine 76, aspartate 102–leucine 135, and aspartate 166–threonine 196. The tract at residues serine 216–cysteine 257 is interaction with TBK1 and IKBKE. Phosphoserine is present on residues serine 318 and serine 353. Positions glutamate 345 to threonine 365 are disordered.

In terms of assembly, homodimer. Interacts with IKBKE, TBK1 and TICAM1. Interacts with TAX1BP1. Interacts with CALCOCO2. In terms of processing, ubiquitinated via 'Lys-48'-linked polyubiquitination by TRIM38, leading to its degradation.

The protein resides in the cytoplasm. Functionally, adapter protein which binds TBK1 and IKBKE playing a role in antiviral innate immunity. Activates serine/threonine-protein kinase TBK1 and facilitates its oligomerization. Enhances the phosphorylation of NF-kappa-B p65 subunit RELA by TBK1. Promotes TBK1-induced as well as TNF-alpha or PMA-induced activation of NF-kappa-B. Participates in IFNB promoter activation via TICAM1. This chain is 5-azacytidine-induced protein 2 (AZI2), found in Pongo abelii (Sumatran orangutan).